A 60-amino-acid chain; its full sequence is Cytotoxin sagitoxin (60 aa).

4 disulfides stabilise this stretch: Cys3–Cys21, Cys14–Cys38, Cys42–Cys53, and Cys54–Cys59.

This sequence belongs to the three-finger toxin family. Short-chain subfamily. Type IA cytotoxin sub-subfamily. Monomer in solution; Homodimer and oligomer (homohexamer) in the presence of negatively charged lipids forming a pore with a size ranging between 20 and 30 Angstroms. As to expression, expressed by the venom gland.

It is found in the secreted. The protein resides in the target cell membrane. Shows cytolytic activity on many different cells by forming pore in lipid membranes. In vivo, increases heart rate or kill the animal by cardiac arrest. In addition, it binds to heparin with high affinity, interacts with Kv channel-interacting protein 1 (KCNIP1) in a calcium-independent manner, and binds to integrin alpha-V/beta-3 (ITGAV/ITGB3) with moderate affinity. In Naja sagittifera (Andaman cobra), this protein is Cytotoxin sagitoxin.